Reading from the N-terminus, the 283-residue chain is MANFKGHALPGTFFLLFGLWWSIKCPFRQILRRKERQVGDRERQKLTALFNRIDLIEGSLKIFFAFVGIMAEQFVPDGPHAHLYQDGWVKLMNWQHSTMYLFYGISGIADVLSVSSHHVPVGLDRLFLSLALFVEGFLFYFHIHNREPLDQHIHSLLLFAVFGGSASTMMEVFKRENAVLELLRCTLAILQGTWFYQIGFVLYPLSGPEWDLTRHDNIMFITMCFCWHLAVALLIVGICYCGVFWTSKWCERRQRGDMEMGLRKSTSTDSSSQKALLQESDEE.

The next 7 membrane-spanning stretches (helical) occupy residues 7 to 27, 55 to 75, 99 to 119, 121 to 141, 153 to 173, 187 to 207, and 218 to 238; these read HALP…KCPF, LIEG…EQFV, MYLF…SHHV, VGLD…LFYF, IHSL…MEVF, LAIL…PLSG, and IMFI…IVGI. The interval 261 to 283 is disordered; sequence GLRKSTSTDSSSQKALLQESDEE. Positions 264–275 are enriched in polar residues; it reads KSTSTDSSSQKA.

It belongs to the TMEM45 family.

The protein localises to the membrane. The sequence is that of Transmembrane protein 45B (tmem45b) from Danio rerio (Zebrafish).